A 419-amino-acid polypeptide reads, in one-letter code: BTB/POZ domain-containing protein KCTD20 (419 aa).

The region spanning 117–191 (EKVTLLVDGT…YKTGIINCPD (75 aa)) is the BTB domain.

Interacts with AKT1; AKT2 and AKT3. Associates with PP2CA. Part of a complex containing MARK4.

Its subcellular location is the cytoplasm. Promotes the phosphorylation of AKT family members. This Homo sapiens (Human) protein is BTB/POZ domain-containing protein KCTD20 (KCTD20).